We begin with the raw amino-acid sequence, 616 residues long: Chaperone protein HscA (616 aa).

Belongs to the heat shock protein 70 family.

Chaperone involved in the maturation of iron-sulfur cluster-containing proteins. Has a low intrinsic ATPase activity which is markedly stimulated by HscB. Involved in the maturation of IscU. The chain is Chaperone protein HscA from Salmonella enteritidis PT4 (strain P125109).